The sequence spans 396 residues: Pre-mycofactocin synthase (396 aa).

Residues 1–383 form the FMN hydroxy acid dehydrogenase domain; it reads MAEAWFETVA…SPADILVPTG (383 aa). FMN contacts are provided by S108, Q128, T156, and K254. H278 acts as the Proton acceptor in catalysis. FMN contacts are provided by residues 309–313 and 332–333; these read DGGIR and GR.

Belongs to the FMN-dependent alpha-hydroxy acid dehydrogenase family. The cofactor is FMN.

The catalysed reaction is 3-amino-5-[(4-hydroxyphenyl)methyl]-4,4-dimethyl-2-pyrrolidin-2-one + O2 + H2O = pre-mycofactocin + H2O2 + NH4(+). Its function is as follows. Involved in the biosynthesis of the enzyme cofactor mycofactocin (MFT). Catalyzes the oxidative deamination of AHDP (3-amino-5-[(4-hydroxyphenyl)methyl]-4,4-dimethyl-2-pyrrolidin-2-one), forming an alpha-keto amide moiety on the resulting molecule, which is called pre-mycofactocin (PMFT). This reaction occurs via a 5-[(4-hydroxyphenyl)methyl]-3-imino-4,4-dimethylpyrrolidin-2-one intermediate, which converts to PMFT. The alpha-keto amide moiety is the redox-active center for the redox activity of mycofactocin. The chain is Pre-mycofactocin synthase (mftD) from Mycobacterium tuberculosis (strain CDC 1551 / Oshkosh).